Reading from the N-terminus, the 469-residue chain is Glutamate--tRNA ligase 2 (469 aa).

The 'HIGH' region signature appears at 10–20; it reads PSPTGFLHIGS. The 'KMSKS' region motif lies at 239 to 243; that stretch reads KLSKR. Lysine 242 lines the ATP pocket.

The protein belongs to the class-I aminoacyl-tRNA synthetase family. Glutamate--tRNA ligase type 1 subfamily. In terms of assembly, monomer.

Its subcellular location is the cytoplasm. It catalyses the reaction tRNA(Glu) + L-glutamate + ATP = L-glutamyl-tRNA(Glu) + AMP + diphosphate. Functionally, catalyzes the attachment of glutamate to tRNA(Glu) in a two-step reaction: glutamate is first activated by ATP to form Glu-AMP and then transferred to the acceptor end of tRNA(Glu). The polypeptide is Glutamate--tRNA ligase 2 (Rickettsia typhi (strain ATCC VR-144 / Wilmington)).